The sequence spans 355 residues: Probable nitronate monooxygenase (355 aa).

Residues Asn71, Gln175, Gly180, Gly219, and 238-241 (QMGT) each bind FMN.

Belongs to the nitronate monooxygenase family. NMO class I subfamily. FMN is required as a cofactor.

The catalysed reaction is 3 propionate 3-nitronate + 3 O2 + H2O = 3 3-oxopropanoate + 2 nitrate + nitrite + H2O2 + 3 H(+). In terms of biological role, nitronate monooxygenase that uses molecular oxygen to catalyze the oxidative denitrification of alkyl nitronates. Acts on propionate 3-nitronate (P3N), the presumed physiological substrate. Probably functions in the detoxification of P3N, a metabolic poison produced by plants and fungi as a defense mechanism. This chain is Probable nitronate monooxygenase, found in Staphylococcus saprophyticus subsp. saprophyticus (strain ATCC 15305 / DSM 20229 / NCIMB 8711 / NCTC 7292 / S-41).